The following is a 70-amino-acid chain: DNA-directed RNA polymerase subunit omega (70 aa).

The protein belongs to the RNA polymerase subunit omega family. The RNAP catalytic core consists of 2 alpha, 1 beta, 1 beta' and 1 omega subunit. When a sigma factor is associated with the core the holoenzyme is formed, which can initiate transcription.

The catalysed reaction is RNA(n) + a ribonucleoside 5'-triphosphate = RNA(n+1) + diphosphate. Functionally, promotes RNA polymerase assembly. Latches the N- and C-terminal regions of the beta' subunit thereby facilitating its interaction with the beta and alpha subunits. The polypeptide is DNA-directed RNA polymerase subunit omega (Clostridium perfringens (strain ATCC 13124 / DSM 756 / JCM 1290 / NCIMB 6125 / NCTC 8237 / Type A)).